Here is a 316-residue protein sequence, read N- to C-terminus: F-box protein At4g09920 (316 aa).

In terms of domain architecture, F-box spans 1 to 47; sequence MDRIIGLPDEVLVKILSFVPTKVAVSTSILSKRWEFLWMWLTKLKFG.

The protein is F-box protein At4g09920 of Arabidopsis thaliana (Mouse-ear cress).